The sequence spans 146 residues: Cystatin-C (146 aa).

An N-terminal signal peptide occupies residues 1–26; that stretch reads MAGPLRAPLLLLAILAVALAVSPAAG. Serine 43 is modified (phosphoserine; by FAM20C). The short motif at 81–85 is the Secondary area of contact element; sequence QIVAG. Disulfide bonds link cysteine 99–cysteine 109 and cysteine 123–cysteine 143.

It belongs to the cystatin family. As to quaternary structure, homodimer. Post-translationally, the Thr-25 variant is O-glycosylated with a core 1 or possibly core 8 glycan. The signal peptide of the O-glycosylated Thr-25 variant is cleaved between Ala-20 and Val-21. Expressed in submandibular and sublingual saliva but not in parotid saliva (at protein level). Expressed in various body fluids, such as the cerebrospinal fluid and plasma. Expressed in highest levels in the epididymis, vas deferens, brain, thymus, and ovary and the lowest in the submandibular gland.

It localises to the secreted. Its function is as follows. As an inhibitor of cysteine proteinases, this protein is thought to serve an important physiological role as a local regulator of this enzyme activity. This chain is Cystatin-C (CST3), found in Homo sapiens (Human).